The primary structure comprises 81 residues: NADH-ubiquinone oxidoreductase chain 6 (81 aa).

A run of 3 helical transmembrane segments spans residues 1–21, 27–47, and 48–68; these read MTYFVFFLGICFVVGVLGVAS, YGVVGLVLASVAGCGWLLSLG, and VSFVALVLFMVYFGGMLVVFV.

The protein belongs to the complex I subunit 6 family.

It localises to the mitochondrion membrane. The enzyme catalyses a ubiquinone + NADH + 5 H(+)(in) = a ubiquinol + NAD(+) + 4 H(+)(out). In terms of biological role, core subunit of the mitochondrial membrane respiratory chain NADH dehydrogenase (Complex I) that is believed to belong to the minimal assembly required for catalysis. Complex I functions in the transfer of electrons from NADH to the respiratory chain. The immediate electron acceptor for the enzyme is believed to be ubiquinone. The chain is NADH-ubiquinone oxidoreductase chain 6 (MT-ND6) from Anas platyrhynchos (Mallard).